A 519-amino-acid polypeptide reads, in one-letter code: Maturase K (519 aa).

This sequence belongs to the intron maturase 2 family. MatK subfamily.

Its subcellular location is the plastid. The protein localises to the chloroplast. Usually encoded in the trnK tRNA gene intron. Probably assists in splicing its own and other chloroplast group II introns. This chain is Maturase K, found in Cycas panzhihuaensis (Dukou cycad).